The primary structure comprises 304 residues: DnaJ homolog subfamily C member 17 (304 aa).

The region spanning 11–76 (DLYALLGIEE…AARAAYDKVR (66 aa)) is the J domain. Residues 79-106 (KKQAAERTQKLDEKRKKVKLDLEARERQ) are compositionally biased toward basic and acidic residues. Residues 79–145 (KKQAAERTQK…SRQLEEQQRL (67 aa)) form a disordered region. S112 carries the post-translational modification Phosphoserine. Over residues 118–145 (SRSTRTLEQEIERLREEGSRQLEEQQRL) the composition is skewed to basic and acidic residues. The RRM domain occupies 178–249 (KCKKEDESKG…NPLKISWLEG (72 aa)). K264 is subject to N6-methyllysine.

The protein resides in the cytoplasm. It is found in the nucleus. Its function is as follows. May negatively affect PAX8-induced thyroglobulin/TG transcription. This Homo sapiens (Human) protein is DnaJ homolog subfamily C member 17 (DNAJC17).